The chain runs to 424 residues: Lipoamide acyltransferase component of branched-chain alpha-keto acid dehydrogenase complex (424 aa).

Positions 3–78 constitute a Lipoyl-binding domain; the sequence is IEQMTMPQLG…QVGEMICKIE (76 aa). K44 bears the N6-lipoyllysine mark. The interval 82–115 is disordered; it reads ANPAEQKQEQPAASEAAENPVAKSAGAADQPNKK. Residues 116-153 enclose the Peripheral subunit-binding (PSBD) domain; it reads RYSPAVLRLAGEHGIDLDQVTGTGAGGRITRKDIQRLI. The segment at 154 to 193 is disordered; sequence ETGGVQEQNPEELKTAAPAPKSASKPEPKEETSYPASAAG. Active-site residues include H395 and D399.

This sequence belongs to the 2-oxoacid dehydrogenase family. As to quaternary structure, forms a 24-polypeptide structural core with octahedral symmetry. Requires (R)-lipoate as cofactor.

The catalysed reaction is N(6)-[(R)-dihydrolipoyl]-L-lysyl-[protein] + 2-methylpropanoyl-CoA = N(6)-[(R)-S(8)-2-methylpropanoyldihydrolipoyl]-L-lysyl-[protein] + CoA. Functionally, the branched-chain alpha-keto dehydrogenase complex catalyzes the overall conversion of alpha-keto acids to acyl-CoA and CO(2). It contains multiple copies of three enzymatic components: branched-chain alpha-keto acid decarboxylase (E1), lipoamide acyltransferase (E2) and lipoamide dehydrogenase (E3). This Bacillus subtilis (strain 168) protein is Lipoamide acyltransferase component of branched-chain alpha-keto acid dehydrogenase complex (bfmBB).